A 307-amino-acid chain; its full sequence is Transcription factor bHLH127 (307 aa).

Disordered regions lie at residues Ser-41–Gln-68 and Pro-101–His-155. Pro residues predominate over residues Ala-110 to Ser-119. The bHLH domain maps to Arg-150–Leu-199.

It belongs to the bHLH protein family. As to quaternary structure, homodimer.

It localises to the nucleus. The chain is Transcription factor bHLH127 (BHLH127) from Arabidopsis thaliana (Mouse-ear cress).